A 254-amino-acid chain; its full sequence is Imidazole glycerol phosphate synthase subunit HisF (254 aa).

Active-site residues include Asp-11 and Asp-130.

The protein belongs to the HisA/HisF family. Heterodimer of HisH and HisF.

The protein resides in the cytoplasm. The enzyme catalyses 5-[(5-phospho-1-deoxy-D-ribulos-1-ylimino)methylamino]-1-(5-phospho-beta-D-ribosyl)imidazole-4-carboxamide + L-glutamine = D-erythro-1-(imidazol-4-yl)glycerol 3-phosphate + 5-amino-1-(5-phospho-beta-D-ribosyl)imidazole-4-carboxamide + L-glutamate + H(+). The protein operates within amino-acid biosynthesis; L-histidine biosynthesis; L-histidine from 5-phospho-alpha-D-ribose 1-diphosphate: step 5/9. In terms of biological role, IGPS catalyzes the conversion of PRFAR and glutamine to IGP, AICAR and glutamate. The HisF subunit catalyzes the cyclization activity that produces IGP and AICAR from PRFAR using the ammonia provided by the HisH subunit. The sequence is that of Imidazole glycerol phosphate synthase subunit HisF from Chromobacterium violaceum (strain ATCC 12472 / DSM 30191 / JCM 1249 / CCUG 213 / NBRC 12614 / NCIMB 9131 / NCTC 9757 / MK).